The primary structure comprises 654 residues: Probable Xaa-Pro aminopeptidase P (654 aa).

Residues aspartate 449, aspartate 460, glutamate 558, and glutamate 572 each coordinate Mn(2+).

The protein belongs to the peptidase M24B family. The cofactor is Mn(2+).

It catalyses the reaction Release of any N-terminal amino acid, including proline, that is linked to proline, even from a dipeptide or tripeptide.. Catalyzes the removal of a penultimate prolyl residue from the N-termini of peptides. This is Probable Xaa-Pro aminopeptidase P (ampp) from Neosartorya fischeri (strain ATCC 1020 / DSM 3700 / CBS 544.65 / FGSC A1164 / JCM 1740 / NRRL 181 / WB 181) (Aspergillus fischerianus).